The chain runs to 139 residues: Cuticle protein 76 (139 aa).

Repeat copies occupy residues 7 to 10, 68 to 71, 75 to 78, 93 to 95, 105 to 108, and 121 to 124.

In terms of biological role, component of the cuticle of migratory locust which contains more than 100 different structural proteins. The sequence is that of Cuticle protein 76 from Locusta migratoria (Migratory locust).